The sequence spans 46 residues: Light-harvesting protein B-800/850 beta 2 chain (46 aa).

Over 2–25 (AERSLSGLTEEEAVAVHAQFQTTF) the chain is Cytoplasmic. 2 residues coordinate a bacteriochlorophyll: H18 and H36. Residues 26 to 46 (SAFIVLAAVAHVLVWVWKPWF) traverse the membrane as a helical segment.

This sequence belongs to the antenna complex beta subunit family. As to quaternary structure, the core complex is formed by different alpha and beta chains, binding bacteriochlorophyll molecules, and arranged most probably in tetrameric structures disposed around the reaction center.

The protein resides in the cell inner membrane. Functionally, antenna complexes are light-harvesting systems, which transfer the excitation energy to the reaction centers. This Magnetospirillum molischianum (Rhodospirillum molischianum) protein is Light-harvesting protein B-800/850 beta 2 chain (B2).